We begin with the raw amino-acid sequence, 109 residues long: Urocortin-2 (109 aa).

An N-terminal signal peptide occupies residues 1-22 (MTRWALVVFMVLMLDRVPGTPI). A propeptide spanning residues 23 to 67 (PTFQLLPQNYPETTPSSVSSESPSDTTTGPSASWSNSKASPYLDT) is cleaved from the precursor. The segment at 24–60 (TFQLLPQNYPETTPSSVSSESPSDTTTGPSASWSNSK) is disordered. Residues 33–50 (PETTPSSVSSESPSDTTT) show a composition bias toward low complexity. Positions 51 to 60 (GPSASWSNSK) are enriched in polar residues. Valine 106 is modified (valine amide; partial).

Belongs to the sauvagine/corticotropin-releasing factor/urotensin I family. In terms of assembly, binds with high affinity to CRF receptors 2-alpha and 2-beta. Post-translationally, glycosylated.

The protein localises to the secreted. Functionally, suppresses food intake, delays gastric emptying and decreases heat-induced edema. Might represent an endogenous ligand for maintaining homeostasis after stress. In Rattus norvegicus (Rat), this protein is Urocortin-2 (Ucn2).